Reading from the N-terminus, the 301-residue chain is uncharacterized protein (301 aa).

Residues 16–28 are compositionally biased toward basic and acidic residues; it reads EITEESEKTKTDL. Residues 16–38 form a disordered region; the sequence is EITEESEKTKTDLQKANTPNKTE. The segment covering 29–38 has biased composition (polar residues); it reads QKANTPNKTE. The 50-residue stretch at 252-301 folds into the G-patch domain; it reads KENVALKMLQRCGWKEGQGLGQHNQGIINPLHVEISGFVTETKHSKINDK.

This is an uncharacterized protein from Schizosaccharomyces pombe (strain 972 / ATCC 24843) (Fission yeast).